A 338-amino-acid polypeptide reads, in one-letter code: CRISPR-associated endonuclease Cas1 (338 aa).

Residues E155, H220, and E235 each contribute to the Mn(2+) site.

Belongs to the CRISPR-associated endonuclease Cas1 family. In terms of assembly, homodimer, forms a heterotetramer with a Cas2 homodimer. Mg(2+) serves as cofactor. The cofactor is Mn(2+).

Functionally, CRISPR (clustered regularly interspaced short palindromic repeat), is an adaptive immune system that provides protection against mobile genetic elements (viruses, transposable elements and conjugative plasmids). CRISPR clusters contain spacers, sequences complementary to antecedent mobile elements, and target invading nucleic acids. CRISPR clusters are transcribed and processed into CRISPR RNA (crRNA). Acts as a dsDNA endonuclease. Involved in the integration of spacer DNA into the CRISPR cassette. The type III-A Csm effector complex binds crRNA and acts as a crRNA-guided RNase, DNase and cyclic oligoadenylate synthase; binding of target RNA cognate to the crRNA is required for all activities. This chain is CRISPR-associated endonuclease Cas1, found in Mycobacterium tuberculosis (strain CDC 1551 / Oshkosh).